A 398-amino-acid polypeptide reads, in one-letter code: Metal tolerance protein 1 (398 aa).

The Cytoplasmic segment spans residues 1 to 56 (MESSSPHHSHIVEVNVGKSDEERIIVASKVCGEAPCGFSDSKNASGDAHERSASMR). Residues 57 to 77 (KLCIAVVLCLVFMSVEVVGGI) traverse the membrane as a helical segment. Residues 78 to 89 (KANSLAILTDAA) are Vacuolar-facing. Residues 90 to 110 (HLLSDVAAFAISLFSLWAAGW) traverse the membrane as a helical segment. Residues 111 to 122 (EATPRQTYGFFR) are Cytoplasmic-facing. A helical membrane pass occupies residues 123–143 (IEILGALVSIQLIWLLTGILV). Over 144 to 159 (YEAIIRIVTETSEVNG) the chain is Vacuolar. Residues 160–180 (FLMFLVAAFGLVVNIIMAVLL) form a helical membrane-spanning segment. The Cytoplasmic segment spans residues 181 to 263 (GHDHGHSHGH…KRNINLQGAY (83 aa)). Positions 182 to 232 (HDHGHSHGHGHGHGHDHHNHSHGVTVTTHHHHHDHEHGHSHGHGEDKHHAH) are required for zinc-binding. Residues 186-232 (HSHGHGHGHGHDHHNHSHGVTVTTHHHHHDHEHGHSHGHGEDKHHAH) form a disordered region. The span at 187-202 (SHGHGHGHGHDHHNHS) shows a compositional bias: basic residues. Positions 216–232 (HEHGHSHGHGEDKHHAH) are enriched in basic and acidic residues. Residues 264–284 (LHVLGDSIQSVGVMIGGAIIW) traverse the membrane as a helical segment. Residues 285-290 (YNPEWK) lie on the Vacuolar side of the membrane. A helical transmembrane segment spans residues 291-311 (IVDLICTLAFSVIVLGTTINM). At 312–398 (IRNILEVLME…ISHVTIQIER (87 aa)) the chain is on the cytoplasmic side.

Belongs to the cation diffusion facilitator (CDF) transporter (TC 2.A.4) family. SLC30A subfamily. As to expression, ubiquitously expressed at low levels.

The protein localises to the vacuole membrane. In terms of biological role, mediates zinc accumulation in roots and confers resistance to zinc. Involved in sequestration of excess zinc in the cytoplasm into vacuoles to maintain zinc homeostasis. Can also transport cadmium with a low efficiency. This chain is Metal tolerance protein 1, found in Arabidopsis thaliana (Mouse-ear cress).